Consider the following 825-residue polypeptide: Zinc finger protein 28 (825 aa).

Positions 26–65 (RPGGGPAAGTVVAPGSPDRGRPRSRNSLASQDQQGAVTSG) are disordered. Positions 33 to 42 (AGTVVAPGSP) are enriched in low complexity. The span at 51-65 (NSLASQDQQGAVTSG) shows a compositional bias: polar residues. Residues 103–174 (VTFGDVAVVF…KRKMRKGQHL (72 aa)) form the KRAB domain. C2H2-type zinc fingers lie at residues 377–399 (FQCNECKKTFTQSSSLTVHQRIH), 405–427 (YKCNQCGKAFSDGSSFARHQRCH), 433–456 (YECPECGKAFIQNTSLVRHWRYYH), 462–484 (FDCIDCGKAFSDHIGLNQHRRIH), 490–512 (YTCEVCHKSFRYGSSLTVHQRIH), 518–540 (YECEICRKAFSHHASLTQHQRVH), 546–568 (FKCKECGKAFRQNIHLASHWRIH), 574–596 (FECGECGKSFSISSQLATHQRIH), 602–624 (YECKVCRKAFTQKAHLAQHQKTH), 630–652 (YECKECGKAFSQTTHLIQHQRVH), 658–680 (YKCLECGKAFGDNSSCTQHRRLH), 686–708 (YECVECGKTFKTKSSLICHRRCH), 714–736 (YECSACGKAFSHRQSLSVHQRIH), and 742–764 (YECKECRKTFIQIGHLNQHKRVH). The segment at 770–792 (YNYKKGRRAFRQTAHFAHHQQIH) adopts a C2H2-type 15; degenerate zinc-finger fold.

It belongs to the krueppel C2H2-type zinc-finger protein family. Expressed predominantly in ovary.

Its subcellular location is the nucleus. Functionally, may be involved in transcriptional regulation. May have a role in embryonic development. This chain is Zinc finger protein 28 (Zfp28), found in Mus musculus (Mouse).